The following is a 665-amino-acid chain: Putative phospholipid:diacylglycerol acyltransferase 2 (665 aa).

A helical membrane pass occupies residues 48 to 68; that stretch reads LIGYLCTAWWLLLFLYHSVPV. The Acyl-ester intermediate role is filled by Ser-237. Catalysis depends on charge relay system residues Asp-567 and His-620.

The protein belongs to the AB hydrolase superfamily. Lipase family.

The protein resides in the membrane. It carries out the reaction a glycerophospholipid + a 1,2-diacyl-sn-glycerol = a monoacylglycerophospholipid + a triacyl-sn-glycerol. This chain is Putative phospholipid:diacylglycerol acyltransferase 2 (PDAT2), found in Arabidopsis thaliana (Mouse-ear cress).